Here is a 292-residue protein sequence, read N- to C-terminus: Bifunctional protein FolD (292 aa).

Residues 166–168 (GRS), Ser-191, and Ile-232 each bind NADP(+).

It belongs to the tetrahydrofolate dehydrogenase/cyclohydrolase family. As to quaternary structure, homodimer.

The enzyme catalyses (6R)-5,10-methylene-5,6,7,8-tetrahydrofolate + NADP(+) = (6R)-5,10-methenyltetrahydrofolate + NADPH. The catalysed reaction is (6R)-5,10-methenyltetrahydrofolate + H2O = (6R)-10-formyltetrahydrofolate + H(+). The protein operates within one-carbon metabolism; tetrahydrofolate interconversion. Functionally, catalyzes the oxidation of 5,10-methylenetetrahydrofolate to 5,10-methenyltetrahydrofolate and then the hydrolysis of 5,10-methenyltetrahydrofolate to 10-formyltetrahydrofolate. The chain is Bifunctional protein FolD from Synechococcus sp. (strain RCC307).